The chain runs to 1015 residues: DNA polymerase catalytic subunit (1015 aa).

It belongs to the DNA polymerase type-B family. As to quaternary structure, forms a complex with the ssDNA-binding protein BALF2, the DNA polymerase processivity factor BMRF1, and the alkaline exonuclease BGLF5. Interacts with the putative helicase-primase complex composed of BBLF4, BSLF1 and BBLF2/3 proteins; these interactions may coordinate leading and lagging strand DNA synthesis at the replication fork.

It localises to the host nucleus. It carries out the reaction DNA(n) + a 2'-deoxyribonucleoside 5'-triphosphate = DNA(n+1) + diphosphate. Functionally, replicates viral genomic DNA in the late phase of lytic infection, producing long concatemeric DNA. The replication complex is composed of six viral proteins: the DNA polymerase, processivity factor, primase, primase-associated factor, helicase, and ssDNA-binding protein. The chain is DNA polymerase catalytic subunit from Epstein-Barr virus (strain B95-8) (HHV-4).